The chain runs to 129 residues: Large ribosomal subunit protein bL17 (129 aa).

This sequence belongs to the bacterial ribosomal protein bL17 family. In terms of assembly, part of the 50S ribosomal subunit. Contacts protein L32.

The polypeptide is Large ribosomal subunit protein bL17 (Yersinia enterocolitica serotype O:8 / biotype 1B (strain NCTC 13174 / 8081)).